We begin with the raw amino-acid sequence, 185 residues long: Large ribosomal subunit protein uL5 (185 aa).

It belongs to the universal ribosomal protein uL5 family. In terms of assembly, part of the 50S ribosomal subunit; part of the 5S rRNA/L5/L18/L25 subcomplex. Contacts the 5S rRNA and the P site tRNA. Forms a bridge to the 30S subunit in the 70S ribosome.

Its function is as follows. This is one of the proteins that bind and probably mediate the attachment of the 5S RNA into the large ribosomal subunit, where it forms part of the central protuberance. In the 70S ribosome it contacts protein S13 of the 30S subunit (bridge B1b), connecting the 2 subunits; this bridge is implicated in subunit movement. Contacts the P site tRNA; the 5S rRNA and some of its associated proteins might help stabilize positioning of ribosome-bound tRNAs. The protein is Large ribosomal subunit protein uL5 of Bacteroides thetaiotaomicron (strain ATCC 29148 / DSM 2079 / JCM 5827 / CCUG 10774 / NCTC 10582 / VPI-5482 / E50).